A 396-amino-acid polypeptide reads, in one-letter code: General transcription factor IIH subunit 2 (396 aa).

One can recognise a VWFA domain in the interval 60 to 236; the sequence is HLYVVVDGSR…HYKELLARHV (177 aa). Y95 is subject to Phosphotyrosine. The C4-type zinc finger occupies 292-309; that stretch reads CPQCRAKYCELPVECKIC.

It belongs to the GTF2H2 family. In terms of assembly, component of the TFIID-containing RNA polymerase II pre-initiation complex that is composed of TBP and at least GTF2A1, GTF2A2, GTF2E1, GTF2E2, GTF2F1, GTF2H2, GTF2H3, GTF2H4, GTF2H5, GTF2B, TCEA1, ERCC2 and ERCC3. Component of the 7-subunit TFIIH core complex composed of XPB/ERCC3, XPD/ERCC2, GTF2H1, GTF2H2, GTF2H3, GTF2H4 and GTF2H5, which is active in NER. The core complex associates with the 3-subunit CDK-activating kinase (CAK) module composed of CCNH/cyclin H, CDK7 and MNAT1 to form the 10-subunit holoenzyme (holo-TFIIH) active in transcription. Interacts with XPB, XPD, GTF2H1 and GTF2H3.

The protein localises to the nucleus. In terms of biological role, component of the general transcription and DNA repair factor IIH (TFIIH) core complex, which is involved in general and transcription-coupled nucleotide excision repair (NER) of damaged DNA and, when complexed to CAK, in RNA transcription by RNA polymerase II. In NER, TFIIH acts by opening DNA around the lesion to allow the excision of the damaged oligonucleotide and its replacement by a new DNA fragment. In transcription, TFIIH has an essential role in transcription initiation. When the pre-initiation complex (PIC) has been established, TFIIH is required for promoter opening and promoter escape. Phosphorylation of the C-terminal tail (CTD) of the largest subunit of RNA polymerase II by the kinase module CAK controls the initiation of transcription. The N-terminus of GTF2H2 interacts with and regulates XPD whereas an intact C-terminus is required for a successful escape of RNAP II form the promoter. The sequence is that of General transcription factor IIH subunit 2 (Gtf2h2) from Rattus norvegicus (Rat).